We begin with the raw amino-acid sequence, 89 residues long: Small ribosomal subunit protein uS15 (89 aa).

It belongs to the universal ribosomal protein uS15 family. As to quaternary structure, part of the 30S ribosomal subunit. Forms a bridge to the 50S subunit in the 70S ribosome, contacting the 23S rRNA.

Functionally, one of the primary rRNA binding proteins, it binds directly to 16S rRNA where it helps nucleate assembly of the platform of the 30S subunit by binding and bridging several RNA helices of the 16S rRNA. In terms of biological role, forms an intersubunit bridge (bridge B4) with the 23S rRNA of the 50S subunit in the ribosome. This Chloroherpeton thalassium (strain ATCC 35110 / GB-78) protein is Small ribosomal subunit protein uS15.